The primary structure comprises 507 residues: Glutamate--tRNA ligase (507 aa).

The 'HIGH' region motif lies at 14–24 (PSPTGPLHIGG). A 'KMSKS' region motif is present at residues 262–266 (KLSKR). Residue Lys265 participates in ATP binding.

The protein belongs to the class-I aminoacyl-tRNA synthetase family. Glutamate--tRNA ligase type 1 subfamily. In terms of assembly, monomer.

It is found in the cytoplasm. The enzyme catalyses tRNA(Glu) + L-glutamate + ATP = L-glutamyl-tRNA(Glu) + AMP + diphosphate. Its function is as follows. Catalyzes the attachment of glutamate to tRNA(Glu) in a two-step reaction: glutamate is first activated by ATP to form Glu-AMP and then transferred to the acceptor end of tRNA(Glu). In Porphyromonas gingivalis (strain ATCC 33277 / DSM 20709 / CIP 103683 / JCM 12257 / NCTC 11834 / 2561), this protein is Glutamate--tRNA ligase.